We begin with the raw amino-acid sequence, 369 residues long: MGERKGQNFYYPPDFNYKTHKSLNGYHGTHALRERAKKIDQGILVIRFEMPFNIWCLGCHNHVGMGVRYNAEKKKIGMYYTTPLHEFRMKCHLCDNYYVIRTDPKNFDYELVEGCSRQELRFDPTDIAQIGAVDRGFTQKLAADAMFKKEHEAEDKDKAATEEGRVDKLEWIQERMRDDFTANSFLRAQFRNEKKSLNETRARDANLRDKLSIGTTQLLPETEEDRRIASMMTRYRDTKTHDDHLESSRDRIESRRIFRRPEETDTPSTSSGSSGGAVPSASERLKATMKAERDKRINASFSTAGTSSATQKLLGIKRKSASSLGVQIKKAAPENSSLQDEEPAVEKPNISNPISLIAQEYGNSSDDSD.

The span at Thr-233–Glu-263 shows a compositional bias: basic and acidic residues. The interval Thr-233 to Asp-369 is disordered. The span at Thr-266 to Ser-282 shows a compositional bias: low complexity. A compositionally biased stretch (basic and acidic residues) spans Glu-283–Ile-297. Low complexity predominate over residues Ala-299–Thr-310.

The protein belongs to the CWC16 family.

This Caenorhabditis elegans protein is Coiled-coil domain-containing protein 130 homolog.